Here is a 188-residue protein sequence, read N- to C-terminus: Zinc finger protein 428 (188 aa).

Residues 1-162 (MTETREPAET…EEEEEEGTYH (162 aa)) form a disordered region. The segment covering 40 to 61 (PDSEEEEDEEEEEEETTDDPEY) has biased composition (acidic residues). The segment covering 84 to 94 (RAAQPPAQPCQ) has biased composition (low complexity). Thr108 is subject to Phosphothreonine. The span at 116–129 (PATAPQEAPAPEGR) shows a compositional bias: low complexity. Positions 138–149 (PPRAGEGRPAGR) are enriched in basic and acidic residues. A C2H2-type zinc finger spans residues 161 to 183 (YHCTECEDSFDNLGELHGHFMLH).

This Homo sapiens (Human) protein is Zinc finger protein 428 (ZNF428).